A 168-amino-acid chain; its full sequence is 3-hydroxyacyl-[acyl-carrier-protein] dehydratase FabZ (168 aa).

Histidine 54 is a catalytic residue.

This sequence belongs to the thioester dehydratase family. FabZ subfamily.

Its subcellular location is the cytoplasm. It catalyses the reaction a (3R)-hydroxyacyl-[ACP] = a (2E)-enoyl-[ACP] + H2O. In terms of biological role, involved in unsaturated fatty acids biosynthesis. Catalyzes the dehydration of short chain beta-hydroxyacyl-ACPs and long chain saturated and unsaturated beta-hydroxyacyl-ACPs. This is 3-hydroxyacyl-[acyl-carrier-protein] dehydratase FabZ from Yersinia enterocolitica serotype O:8 / biotype 1B (strain NCTC 13174 / 8081).